The chain runs to 147 residues: MRALIQRVLEAKVEVDGQTTGEIKKGLLVFLGLGKEDTLEKGQKLIDKILKYRIFDDEQGKMGWNVSQANGGVLLVSQFTLMAQTQKGLRPDFGPAMPPSDAKALYEQLVEYTRSQFENVQTGIFAADMKVHLINDGPVTFNLEVEA.

Positions 137–138 (GP) match the Gly-cisPro motif, important for rejection of L-amino acids motif.

This sequence belongs to the DTD family. Homodimer.

The protein resides in the cytoplasm. The enzyme catalyses glycyl-tRNA(Ala) + H2O = tRNA(Ala) + glycine + H(+). The catalysed reaction is a D-aminoacyl-tRNA + H2O = a tRNA + a D-alpha-amino acid + H(+). Functionally, an aminoacyl-tRNA editing enzyme that deacylates mischarged D-aminoacyl-tRNAs. Also deacylates mischarged glycyl-tRNA(Ala), protecting cells against glycine mischarging by AlaRS. Acts via tRNA-based rather than protein-based catalysis; rejects L-amino acids rather than detecting D-amino acids in the active site. By recycling D-aminoacyl-tRNA to D-amino acids and free tRNA molecules, this enzyme counteracts the toxicity associated with the formation of D-aminoacyl-tRNA entities in vivo and helps enforce protein L-homochirality. The polypeptide is D-aminoacyl-tRNA deacylase (Acinetobacter baumannii (strain ACICU)).